A 517-amino-acid polypeptide reads, in one-letter code: Perilipin-1 (517 aa).

Position 81 is a phosphoserine (S81). T85 is modified (phosphothreonine). A phosphoserine mark is found at S126, S130, S132, S137, and S174. Residues 197–217 are disordered; sequence VESAPSSGRQKTQKAPKAKPS. T224, T299, and T301 each carry phosphothreonine. Residues 285 to 321 are disordered; that stretch reads HNLAASKDENHEDQTDTEGEETDEEEEEEESEAEENV. The interval 291-322 is required for interaction with CIDEC; the sequence is KDENHEDQTDTEGEETDEEEEEEESEAEENVL. Positions 299 to 319 are enriched in acidic residues; sequence TDTEGEETDEEEEEEESEAEE. Phosphoserine is present on residues S315, S385, S387, P408, S411, S434, S436, S440, S460, S492, and S494. A disordered region spans residues 415–495; that stretch reads PESEFQDIDN…KPARRVSDSF (81 aa). The segment covering 483-492 has biased composition (basic and acidic residues); sequence PREKPARRVS.

Belongs to the perilipin family. As to quaternary structure, interacts with ABHD5. Interacts with CIDEC. Interacts with AQP7. Post-translationally, major cAMP-dependent protein kinase substrate in adipocytes, also dephosphorylated by PP1. When phosphorylated, may be maximally sensitive to HSL. When unphosphorylated, may play a role in the inhibition of lipolysis, by acting as a barrier in lipid droplet. The N-terminus is blocked. In terms of tissue distribution, adipocytes.

Its subcellular location is the endoplasmic reticulum. The protein resides in the lipid droplet. Functionally, modulator of adipocyte lipid metabolism. Coats lipid storage droplets to protect them from breakdown by hormone-sensitive lipase (HSL). Its absence may result in leanness. Plays a role in unilocular lipid droplet formation by activating CIDEC. Their interaction promotes lipid droplet enlargement and directional net neutral lipid transfer. May modulate lipolysis and triglyceride levels. The protein is Perilipin-1 (Plin1) of Rattus norvegicus (Rat).